The following is a 245-amino-acid chain: GTP cyclohydrolase 1 type 2 homolog (245 aa).

5 residues coordinate a divalent metal cation: His63, His64, Asp100, His213, and Glu217.

The protein belongs to the GTP cyclohydrolase I type 2/NIF3 family. In terms of assembly, homohexamer.

The sequence is that of GTP cyclohydrolase 1 type 2 homolog from Archaeoglobus fulgidus (strain ATCC 49558 / DSM 4304 / JCM 9628 / NBRC 100126 / VC-16).